Here is a 199-residue protein sequence, read N- to C-terminus: MHFLVGISTENYVILAADKATFAYGAILADSENDKEYRLGKKLTMMCIGEEGDVAQFGDWTKRNLQLYSVRNGYEVSPSCAHHFVRRSIAEGLRSQDHYTVDVLIGGYDDKEDKAFLGSVDYLANGLGQQPYLFRGFCGRFCYAIMDREYKKDMTEAEGLALMNKCIGEAKRRFVANIPGYKVVIIDKKGYRKLDDVLF.

Belongs to the peptidase T1B family. The 26S proteasome consists of a 20S proteasome core and two 19S regulatory subunits. The 20S proteasome core is composed of 28 subunits that are arranged in four stacked rings, resulting in a barrel-shaped structure. The two end rings are each formed by seven alpha subunits, and the two central rings are each formed by seven beta subunits. The catalytic chamber with the active sites is on the inside of the barrel.

Its subcellular location is the cytoplasm. It is found in the nucleus. In terms of biological role, non-catalytic component of the proteasome, a multicatalytic proteinase complex which is characterized by its ability to cleave peptides with Arg, Phe, Tyr, Leu, and Glu adjacent to the leaving group at neutral or slightly basic pH. The proteasome has an ATP-dependent proteolytic activity. The sequence is that of Proteasome subunit beta type-2 (pbs-4) from Caenorhabditis elegans.